Reading from the N-terminus, the 273-residue chain is MEVDDGSRATPPLDAVAAAFKSQVMELQDLVLARSMFPATALPDLANVDALVTAMESQVETISRRLQEELDAIPKAKKLVQRSLKEEEKLQHMLANLPSGMRKNDFANQHEQSSSRMLPHFNSSFTEANECELKIKDEPVAAPRKGRAPAPRWYISTEELDSLSSYMRGRLTLEKVNIAINEVASYADANAHLVTCPKKKLSEDTWEKALELRDIAASGAVKGNHFFLEADIKGPGLKLDNTGKAILTVLRHLGRFHEVRIGHHRVFILSKQA.

A coiled-coil region spans residues 77 to 97; that stretch reads KKLVQRSLKEEEKLQHMLANL.

It belongs to the SKA1 family.

The polypeptide is SKA complex subunit 1 homolog (Zea mays (Maize)).